The primary structure comprises 179 residues: MNRLKEKFQKEITPALVSKFNYKSVMEVPKIEKIVINTGVGDAVSNSKALDNAVEELTQIAGQKPVVTRAKKSIAGFRLREGMPIGAKVTLRGEQMYEFFDKLVSVSLPRVRDFRGVSKKSFDGRGNYTLGVKEQLIFPEIDYDKVSKVRGMDIVIVTTAKTDEEARELLTQFGMPFQK.

The protein belongs to the universal ribosomal protein uL5 family. In terms of assembly, part of the 50S ribosomal subunit; part of the 5S rRNA/L5/L18/L25 subcomplex. Contacts the 5S rRNA and the P site tRNA. Forms a bridge to the 30S subunit in the 70S ribosome.

This is one of the proteins that bind and probably mediate the attachment of the 5S RNA into the large ribosomal subunit, where it forms part of the central protuberance. In the 70S ribosome it contacts protein S13 of the 30S subunit (bridge B1b), connecting the 2 subunits; this bridge is implicated in subunit movement. Contacts the P site tRNA; the 5S rRNA and some of its associated proteins might help stabilize positioning of ribosome-bound tRNAs. This is Large ribosomal subunit protein uL5 from Bacillus cereus (strain G9842).